We begin with the raw amino-acid sequence, 445 residues long: Glucose-6-phosphate isomerase (445 aa).

The active-site Proton donor is the E287. Catalysis depends on residues H308 and K422.

This sequence belongs to the GPI family.

The protein localises to the cytoplasm. It catalyses the reaction alpha-D-glucose 6-phosphate = beta-D-fructose 6-phosphate. It functions in the pathway carbohydrate biosynthesis; gluconeogenesis. Its pathway is carbohydrate degradation; glycolysis; D-glyceraldehyde 3-phosphate and glycerone phosphate from D-glucose: step 2/4. Functionally, catalyzes the reversible isomerization of glucose-6-phosphate to fructose-6-phosphate. The polypeptide is Glucose-6-phosphate isomerase (Bacteroides fragilis (strain ATCC 25285 / DSM 2151 / CCUG 4856 / JCM 11019 / LMG 10263 / NCTC 9343 / Onslow / VPI 2553 / EN-2)).